A 445-amino-acid polypeptide reads, in one-letter code: Phosphoglucosamine mutase (445 aa).

Ser-102 serves as the catalytic Phosphoserine intermediate. Mg(2+) is bound by residues Ser-102, Asp-241, Asp-243, and Asp-245. Phosphoserine is present on Ser-102.

This sequence belongs to the phosphohexose mutase family. Mg(2+) serves as cofactor. Post-translationally, activated by phosphorylation.

It catalyses the reaction alpha-D-glucosamine 1-phosphate = D-glucosamine 6-phosphate. In terms of biological role, catalyzes the conversion of glucosamine-6-phosphate to glucosamine-1-phosphate. In Salmonella choleraesuis (strain SC-B67), this protein is Phosphoglucosamine mutase.